We begin with the raw amino-acid sequence, 670 residues long: UvrABC system protein B (670 aa).

Residues 51-433 (DGLKKGEPFQ…SSRVVEQIIR (383 aa)) enclose the Helicase ATP-binding domain. Position 64–71 (64–71 (GVTGSGKT)) interacts with ATP. The Beta-hairpin motif lies at 117–140 (YYDYYQPESYLPAKDQYIEKDAMI). A Helicase C-terminal domain is found at 453 to 612 (DVMQEIRKIV…IVPTTIRKPI (160 aa)). Positions 631–666 (PNVIIELDAEMREAADRLDFERAIQVRELIKKLEKE) constitute a UVR domain.

The protein belongs to the UvrB family. Forms a heterotetramer with UvrA during the search for lesions. Interacts with UvrC in an incision complex.

The protein localises to the cytoplasm. The UvrABC repair system catalyzes the recognition and processing of DNA lesions. A damage recognition complex composed of 2 UvrA and 2 UvrB subunits scans DNA for abnormalities. Upon binding of the UvrA(2)B(2) complex to a putative damaged site, the DNA wraps around one UvrB monomer. DNA wrap is dependent on ATP binding by UvrB and probably causes local melting of the DNA helix, facilitating insertion of UvrB beta-hairpin between the DNA strands. Then UvrB probes one DNA strand for the presence of a lesion. If a lesion is found the UvrA subunits dissociate and the UvrB-DNA preincision complex is formed. This complex is subsequently bound by UvrC and the second UvrB is released. If no lesion is found, the DNA wraps around the other UvrB subunit that will check the other stand for damage. This chain is UvrABC system protein B, found in Methanosarcina mazei (strain ATCC BAA-159 / DSM 3647 / Goe1 / Go1 / JCM 11833 / OCM 88) (Methanosarcina frisia).